The following is a 240-amino-acid chain: Uridylate kinase (240 aa).

12-15 serves as a coordination point for ATP; it reads KLSG. The segment at 20-25 is involved in allosteric activation by GTP; sequence GEKGFG. Gly54 contacts UMP. ATP-binding residues include Gly55 and Arg59. Residues Asp74 and 135–142 contribute to the UMP site; that span reads TGSPYFST. Residues Asn163, Tyr169, and Asp172 each coordinate ATP.

The protein belongs to the UMP kinase family. In terms of assembly, homohexamer.

Its subcellular location is the cytoplasm. It carries out the reaction UMP + ATP = UDP + ADP. It participates in pyrimidine metabolism; CTP biosynthesis via de novo pathway; UDP from UMP (UMPK route): step 1/1. With respect to regulation, allosterically activated by GTP. Inhibited by UTP. In terms of biological role, catalyzes the reversible phosphorylation of UMP to UDP. The polypeptide is Uridylate kinase (Limosilactobacillus reuteri (Lactobacillus reuteri)).